The sequence spans 206 residues: N-(5'-phosphoribosyl)anthranilate isomerase (206 aa).

The protein belongs to the TrpF family.

The enzyme catalyses N-(5-phospho-beta-D-ribosyl)anthranilate = 1-(2-carboxyphenylamino)-1-deoxy-D-ribulose 5-phosphate. It functions in the pathway amino-acid biosynthesis; L-tryptophan biosynthesis; L-tryptophan from chorismate: step 3/5. The sequence is that of N-(5'-phosphoribosyl)anthranilate isomerase from Chlamydia felis (strain Fe/C-56) (Chlamydophila felis).